The following is a 201-amino-acid chain: tRNA (guanine-N(7)-)-methyltransferase (201 aa).

S-adenosyl-L-methionine-binding residues include E33, E58, D85, and D106. D106 is an active-site residue. Residues K110, D142, and 180-183 (TTYE) contribute to the substrate site.

The protein belongs to the class I-like SAM-binding methyltransferase superfamily. TrmB family.

It carries out the reaction guanosine(46) in tRNA + S-adenosyl-L-methionine = N(7)-methylguanosine(46) in tRNA + S-adenosyl-L-homocysteine. The protein operates within tRNA modification; N(7)-methylguanine-tRNA biosynthesis. Its function is as follows. Catalyzes the formation of N(7)-methylguanine at position 46 (m7G46) in tRNA. In Mesomycoplasma hyopneumoniae (strain 232) (Mycoplasma hyopneumoniae), this protein is tRNA (guanine-N(7)-)-methyltransferase.